The chain runs to 1363 residues: Clustered mitochondria protein homolog (1363 aa).

2 TPR repeats span residues 29–63 (LPSF…IVLC) and 120–154 (KEKS…DIGS). The interval 172–191 (KEAKKEESTEKEQQEKEELS) is disordered. One copy of the TPR 3 repeat lies at 283-316 (STINFNPTIKINEKGKFNKSYLLYDLVCQLSPLF). In terms of domain architecture, Clu spans 361 to 631 (DLSRSQLSSL…RTTPRDIEFI (271 aa)). The tract at residues 521-544 (PVITSPTTDAEGKNEAEEPESEPV) is disordered. The TPR 4 repeat unit spans residues 548–581 (VYGLSSDGSRILEDKSFEEPLKQIGDFFHLKPHK). Basic and acidic residues predominate over residues 799–832 (AKAEKKREEEKEKEEKEATESEDKKEKKEDKEDA). The segment at 799–844 (AKAEKKREEEKEKEEKEATESEDKKEKKEDKEDAEKEEAEAEEEVP) is disordered. Over residues 833 to 842 (EKEEAEAEEE) the composition is skewed to acidic residues. TPR repeat units lie at residues 1057 to 1090 (VEEI…NESI), 1141 to 1174 (ITAY…WSLV), 1183 to 1216 (INTL…TKKL), and 1225 to 1258 (GFIY…FMKL). The disordered stretch occupies residues 1291-1363 (QQETQKKSKT…SGSKKSNKKK (73 aa)). The segment covering 1330-1342 (PPQSNPEIANQSI) has biased composition (polar residues).

Belongs to the CLU family. May associate with the eukaryotic translation initiation factor 3 (eIF-3) complex.

Its subcellular location is the cytoplasm. Functionally, mRNA-binding protein involved in proper cytoplasmic distribution of mitochondria. The sequence is that of Clustered mitochondria protein homolog from Candida albicans (strain SC5314 / ATCC MYA-2876) (Yeast).